Reading from the N-terminus, the 553-residue chain is Replication factor C large subunit (553 aa).

50–57 contributes to the ATP binding site; it reads GGPGVGKT. Positions 438-553 are disordered; that stretch reads GKRPGKPEAG…SKKQRTLFDF (116 aa). The span at 442–451 shows a compositional bias: basic and acidic residues; the sequence is GKPEAGEPRE. The span at 503-513 shows a compositional bias: low complexity; the sequence is EAPMAAAMPAA. Residues 532–553 are compositionally biased toward basic and acidic residues; the sequence is EPEKPPAAEDKCSKKQRTLFDF.

Belongs to the activator 1 small subunits family. RfcL subfamily. As to quaternary structure, heteromultimer composed of small subunits (RfcS) and large subunits (RfcL).

Its function is as follows. Part of the RFC clamp loader complex which loads the PCNA sliding clamp onto DNA. The polypeptide is Replication factor C large subunit (Methanocella arvoryzae (strain DSM 22066 / NBRC 105507 / MRE50)).